The chain runs to 505 residues: Glycerol kinase 2 (505 aa).

Position 17 (Thr-17) interacts with ADP. The ATP site is built by Thr-17, Thr-18, and Ser-19. Residue Thr-17 coordinates sn-glycerol 3-phosphate. Arg-21 provides a ligand contact to ADP. 4 residues coordinate sn-glycerol 3-phosphate: Arg-87, Glu-88, Tyr-139, and Asp-249. Glycerol contacts are provided by Arg-87, Glu-88, Tyr-139, Asp-249, and Gln-250. 2 residues coordinate ADP: Thr-271 and Gly-314. Positions 271, 314, 318, and 415 each coordinate ATP. ADP is bound by residues Gly-415 and Asn-419.

It belongs to the FGGY kinase family.

It catalyses the reaction glycerol + ATP = sn-glycerol 3-phosphate + ADP + H(+). The protein operates within polyol metabolism; glycerol degradation via glycerol kinase pathway; sn-glycerol 3-phosphate from glycerol: step 1/1. Inhibited by fructose 1,6-bisphosphate (FBP). Its function is as follows. Key enzyme in the regulation of glycerol uptake and metabolism. Catalyzes the phosphorylation of glycerol to yield sn-glycerol 3-phosphate. The sequence is that of Glycerol kinase 2 from Pseudomonas aeruginosa (strain ATCC 15692 / DSM 22644 / CIP 104116 / JCM 14847 / LMG 12228 / 1C / PRS 101 / PAO1).